We begin with the raw amino-acid sequence, 386 residues long: Cytochrome b (386 aa).

4 consecutive transmembrane segments (helical) span residues 32–52 (LGSL…FLAM), 76–98 (WFIR…IHIG), 113–133 (VWNV…LGYC), and 179–199 (FFAF…MHFM). His82 and His96 together coordinate heme b. Heme b-binding residues include His183 and His197. His202 is an a ubiquinone binding site. 4 helical membrane-spanning segments follow: residues 225–245 (FIFK…LFVF), 289–309 (LLGV…PITD), 321–341 (FSKF…HLGE), and 348–368 (FVVM…VIVP).

The protein belongs to the cytochrome b family. As to quaternary structure, fungal cytochrome b-c1 complex contains 10 subunits; 3 respiratory subunits, 2 core proteins and 5 low-molecular weight proteins. Cytochrome b-c1 complex is a homodimer. Requires heme b as cofactor.

Its subcellular location is the mitochondrion inner membrane. Functionally, component of the ubiquinol-cytochrome c reductase complex (complex III or cytochrome b-c1 complex) that is part of the mitochondrial respiratory chain. The b-c1 complex mediates electron transfer from ubiquinol to cytochrome c. Contributes to the generation of a proton gradient across the mitochondrial membrane that is then used for ATP synthesis. This is Cytochrome b (COB) from Kluyveromyces lactis (strain ATCC 8585 / CBS 2359 / DSM 70799 / NBRC 1267 / NRRL Y-1140 / WM37) (Yeast).